Reading from the N-terminus, the 1021-residue chain is Ephrin type-B receptor 6 (1021 aa).

Residues methionine 1–alanine 31 form the signal peptide. The Extracellular portion of the chain corresponds to leucine 32 to serine 594. One can recognise an Eph LBD domain in the interval glutamate 33–arginine 237. The tract at residues serine 163 to glycine 182 is disordered. The segment covering serine 166–serine 176 has biased composition (low complexity). Fibronectin type-III domains follow at residues proline 369–glutamate 486 and valine 487–glutamine 582. Asparagine 480 is a glycosylation site (N-linked (GlcNAc...) asparagine). A helical membrane pass occupies residues leucine 595–leucine 615. Over alanine 616–valine 1021 the chain is Cytoplasmic. The Protein kinase domain occupies isoleucine 670–isoleucine 919. Isoleucine 676–valine 684 lines the ATP pocket. In terms of domain architecture, SAM spans proline 948–histidine 1012. Residues valine 1019–valine 1021 carry the PDZ-binding motif.

It belongs to the protein kinase superfamily. Tyr protein kinase family. Ephrin receptor subfamily. As to quaternary structure, interacts with CBL and EPHB1. Interacts with FYN; this interaction takes place in a ligand-independent manner. Post-translationally, ligand-binding increases phosphorylation on tyrosine residues. Phosphorylation on tyrosine residues is mediated by transphosphorylation by the catalytically active EPHB1 in a ligand-independent manner. Tyrosine phosphorylation of the receptor may act as a switch on the functional transition from cell adhesion/attraction to de-adhesion/repulsion. In terms of tissue distribution, expressed in brain. Expressed in non invasive breast carcinoma cell lines (at protein level). Strong expression in brain and pancreas, and weak expression in other tissues, such as heart, placenta, lung, liver, skeletal muscle and kidney. Expressed in breast non invasive tumors but not in metastatic lesions. Isoform 3 is expressed in cell lines of glioblastomas, anaplastic astrocytomas, gliosarcomas and astrocytomas. Isoform 3 is not detected in normal tissues.

It is found in the membrane. It localises to the secreted. In terms of biological role, kinase-defective receptor for members of the ephrin-B family. Binds to ephrin-B1 and ephrin-B2. Modulates cell adhesion and migration by exerting both positive and negative effects upon stimulation with ephrin-B2. Inhibits JNK activation, T-cell receptor-induced IL-2 secretion and CD25 expression upon stimulation with ephrin-B2. In Homo sapiens (Human), this protein is Ephrin type-B receptor 6 (EPHB6).